A 613-amino-acid polypeptide reads, in one-letter code: Transcription factor Sp2 (613 aa).

The disordered stretch occupies residues 1–32 (MSDPQTSMAATAAVSPSDYLQPAASTTQDSQP). Positions 23–32 (AASTTQDSQP) are enriched in polar residues. At serine 78 the chain carries Phosphoserine. The span at 225-235 (TGAPTQLLTES) shows a compositional bias: polar residues. Positions 225-258 (TGAPTQLLTESPPTPLSKTNKKARKKSLPASQPP) are disordered. The short motif at 361-369 (GEVQTVLVQ) is the 9aaTAD; inactive element. The segment covering 372 to 389 (PPATAAATSNTTCSSPAS) has biased composition (low complexity). The disordered stretch occupies residues 372-404 (PPATAAATSNTTCSSPASRAPHLSGTSKKHSAA). 3 consecutive C2H2-type zinc fingers follow at residues 525–549 (HVCH…VRLH), 555–579 (FVCN…ARTH), and 585–607 (FECA…YKTH).

This sequence belongs to the Sp1 C2H2-type zinc-finger protein family.

The protein resides in the nucleus. In terms of biological role, binds to GC box promoters elements and selectively activates mRNA synthesis from genes that contain functional recognition sites. The protein is Transcription factor Sp2 (SP2) of Homo sapiens (Human).